The sequence spans 871 residues: Pentatricopeptide repeat-containing protein DOT4, chloroplastic (871 aa).

A chloroplast-targeting transit peptide spans 1–28 (MAMLVTNLSSSSFCFFSSPHLQNQKEIR). PPR repeat units lie at residues 60–94 (SVTD…DIDP), 96–127 (TLCS…GFVI), 128–158 (DSNL…VKIE), 159–193 (KALF…GVEM), 194–228 (DSYT…GFGE), 229–259 (RNSV…MTER), 260–294 (DVIS…GIEI), 295–329 (DLAT…CFSR), 330–360 (EDRF…MSDR), 361–395 (SVVS…GISP), 396–430 (DVYT…DLGF), 431–465 (DIFV…DIIS), 466–497 (WNTI…RFSP), 498–532 (DERT…GYFS), 533–563 (DRHV…IASK), 564–598 (DLVS…GIEA), 599–629 (DEIS…MRHE), and 635–665 (TVEH…MPIP). The type E motif stretch occupies residues 670-745 (IWGALLCGCR…NPGCSWIEIK (76 aa)). The type E(+) motif stretch occupies residues 746-776 (GRVNIFVAGDSSNPETENIEAFLRKVRARMI). Residues 777-871 (EEGYSPLTKY…DGHCSCRGFW (95 aa)) form a type DYW motif region.

This sequence belongs to the PPR family. PCMP-H subfamily. Zn(2+) is required as a cofactor. As to expression, weakly expressed in leaves.

The protein localises to the plastid. The protein resides in the chloroplast. Functionally, plays a major role in single RNA editing events in chloroplasts. Acts as a site-recognition transacting factor involved in the edition of the unique site (corresponding to cytidine-488) of rpoC1, which is a plastid-encoded subunit of the chloroplast DNA-directed RNA polymerase. May provide the catalytic activity for editing site conversion. Involved in leaf vasculature patterning. This is Pentatricopeptide repeat-containing protein DOT4, chloroplastic from Arabidopsis thaliana (Mouse-ear cress).